A 250-amino-acid chain; its full sequence is MAVTKLVLVRHGESQWNKENRFTGWYDVDLSEKGVSEAKAAGKLLKEEGFSFDFAYTSVLKRAIHTLWNVLDELDQAWLPVEKSWKLNERHYGALQGLNKAETAEKYGDEQVKQWRRGFAVTPPELTKDDERYPGHDPRYAKLSEKELPLTESLALTIDRVIPYWNDTILPRMKSGERVIIAAHGNSLRALVKYLDNMSEDEILELNIPTGVPLVYEFDENFKPIKHYYLGNADEIAAKAAAVANQGKAK.

Substrate is bound by residues R10–N17, T23–G24, R62, E89–Y92, K100, R116–R117, and G185–N186. H11 serves as the catalytic Tele-phosphohistidine intermediate. E89 acts as the Proton donor/acceptor in catalysis.

This sequence belongs to the phosphoglycerate mutase family. BPG-dependent PGAM subfamily. Homodimer.

The enzyme catalyses (2R)-2-phosphoglycerate = (2R)-3-phosphoglycerate. It participates in carbohydrate degradation; glycolysis; pyruvate from D-glyceraldehyde 3-phosphate: step 3/5. Its function is as follows. Catalyzes the interconversion of 2-phosphoglycerate and 3-phosphoglycerate. This chain is 2,3-bisphosphoglycerate-dependent phosphoglycerate mutase, found in Salmonella choleraesuis (strain SC-B67).